A 362-amino-acid chain; its full sequence is Alcohol dehydrogenase 13 (362 aa).

Residues Cys-51, His-73, Cys-104, Cys-107, Cys-110, Cys-118, and Cys-168 each coordinate Zn(2+). Residue His-73 participates in substrate binding. NAD(+)-binding positions include 193 to 198 (GLGGLG) and 280 to 282 (VGA).

It belongs to the zinc-containing alcohol dehydrogenase family. Class-III subfamily. As to quaternary structure, homodimer. It depends on Zn(2+) as a cofactor.

This chain is Alcohol dehydrogenase 13, found in Catharanthus roseus (Madagascar periwinkle).